A 114-amino-acid chain; its full sequence is NADH-ubiquinone oxidoreductase chain 3 (114 aa).

3 helical membrane-spanning segments follow: residues 1-21 (MIFYLHITIFLVVCLLMMLFF), 55-75 (FFFVGIVFLIFDVEIVVILPF), and 85-105 (MFVFSFTFINFLIVLGLLYEF).

It belongs to the complex I subunit 3 family.

The protein resides in the mitochondrion membrane. The catalysed reaction is a ubiquinone + NADH + 5 H(+)(in) = a ubiquinol + NAD(+) + 4 H(+)(out). Its function is as follows. Core subunit of the mitochondrial membrane respiratory chain NADH dehydrogenase (Complex I) that is believed to belong to the minimal assembly required for catalysis. Complex I functions in the transfer of electrons from NADH to the respiratory chain. The immediate electron acceptor for the enzyme is believed to be ubiquinone. The chain is NADH-ubiquinone oxidoreductase chain 3 (ND3) from Rhipicephalus sanguineus (Brown dog tick).